The chain runs to 89 residues: Pigment-dispersing hormone peptides (89 aa).

An N-terminal signal peptide occupies residues 1–22; it reads MTAMAVSGKLLTALVLSTYILG. Alanine 86 is subject to Alanine amide.

Belongs to the arthropod PDH family.

The protein resides in the secreted. In terms of biological role, capable of inducing pigment dispersion in the chromatophores of the fiddler crab Uca pugilator. This is Pigment-dispersing hormone peptides from Romalea microptera (Eastern lubber grasshopper).